The sequence spans 317 residues: Glycerol-3-phosphate dehydrogenase [NAD(P)+] (317 aa).

The NADPH site is built by W20, R40, R41, and K88. The sn-glycerol 3-phosphate site is built by K88 and G116. Position 120 (S120) interacts with NADPH. Residues K171, D224, S234, R235, and N236 each coordinate sn-glycerol 3-phosphate. K171 (proton acceptor) is an active-site residue. R235 contacts NADPH. Residue E261 coordinates NADPH.

It belongs to the NAD-dependent glycerol-3-phosphate dehydrogenase family.

The protein resides in the cytoplasm. It carries out the reaction sn-glycerol 3-phosphate + NAD(+) = dihydroxyacetone phosphate + NADH + H(+). The enzyme catalyses sn-glycerol 3-phosphate + NADP(+) = dihydroxyacetone phosphate + NADPH + H(+). Its pathway is membrane lipid metabolism; glycerophospholipid metabolism. Catalyzes the reduction of the glycolytic intermediate dihydroxyacetone phosphate (DHAP) to sn-glycerol 3-phosphate (G3P), the key precursor for phospholipid synthesis. In Synechocystis sp. (strain ATCC 27184 / PCC 6803 / Kazusa), this protein is Glycerol-3-phosphate dehydrogenase [NAD(P)+].